The following is a 295-amino-acid chain: Protoheme IX farnesyltransferase (295 aa).

A run of 9 helical transmembrane segments spans residues I24–H44, P45–I65, S94–V114, I117–L137, N144–T164, S171–L191, K216–L236, L240–V260, and M272–I292.

This sequence belongs to the UbiA prenyltransferase family. Protoheme IX farnesyltransferase subfamily.

The protein localises to the cell membrane. It catalyses the reaction heme b + (2E,6E)-farnesyl diphosphate + H2O = Fe(II)-heme o + diphosphate. It functions in the pathway porphyrin-containing compound metabolism; heme O biosynthesis; heme O from protoheme: step 1/1. Converts heme B (protoheme IX) to heme O by substitution of the vinyl group on carbon 2 of heme B porphyrin ring with a hydroxyethyl farnesyl side group. The chain is Protoheme IX farnesyltransferase from Wolbachia pipientis wMel.